The chain runs to 82 residues: Small ribosomal subunit protein bS16 (82 aa).

The protein belongs to the bacterial ribosomal protein bS16 family.

In Vibrio parahaemolyticus serotype O3:K6 (strain RIMD 2210633), this protein is Small ribosomal subunit protein bS16.